The chain runs to 196 residues: Nucleoside triphosphate pyrophosphatase (196 aa).

D73 (proton acceptor) is an active-site residue.

Belongs to the Maf family. A divalent metal cation is required as a cofactor.

It is found in the cytoplasm. It catalyses the reaction a ribonucleoside 5'-triphosphate + H2O = a ribonucleoside 5'-phosphate + diphosphate + H(+). The catalysed reaction is a 2'-deoxyribonucleoside 5'-triphosphate + H2O = a 2'-deoxyribonucleoside 5'-phosphate + diphosphate + H(+). Nucleoside triphosphate pyrophosphatase. May have a dual role in cell division arrest and in preventing the incorporation of modified nucleotides into cellular nucleic acids. The protein is Nucleoside triphosphate pyrophosphatase of Chlamydia pneumoniae (Chlamydophila pneumoniae).